Reading from the N-terminus, the 396-residue chain is Elongation factor Tu (396 aa).

A tr-type G domain is found at 10–205 (KPHVNIGTIG…AVDESIPDPV (196 aa)). The G1 stretch occupies residues 19 to 26 (GHVDHGKT). 19-26 (GHVDHGKT) is a GTP binding site. T26 is a Mg(2+) binding site. The interval 62-66 (GITIN) is G2. Residues 83–86 (DAPG) form a G3 region. Residues 83-87 (DAPGH) and 138-141 (NKAD) each bind GTP. Positions 138-141 (NKAD) are G4. Residues 175–177 (SGL) form a G5 region.

This sequence belongs to the TRAFAC class translation factor GTPase superfamily. Classic translation factor GTPase family. EF-Tu/EF-1A subfamily. Monomer.

It localises to the cytoplasm. The catalysed reaction is GTP + H2O = GDP + phosphate + H(+). GTP hydrolase that promotes the GTP-dependent binding of aminoacyl-tRNA to the A-site of ribosomes during protein biosynthesis. The polypeptide is Elongation factor Tu (Nocardia farcinica (strain IFM 10152)).